The sequence spans 418 residues: Argininosuccinate synthase (418 aa).

Residues 14–22 (AYSGGLDTS) and Ala-42 contribute to the ATP site. L-citrulline is bound by residues Tyr-94 and Ser-99. Gly-124 contributes to the ATP binding site. The L-aspartate site is built by Thr-126, Asn-130, and Asp-131. Asn-130 is an L-citrulline binding site. Residues Arg-134, Ser-183, Ser-192, Glu-273, and Tyr-285 each coordinate L-citrulline.

This sequence belongs to the argininosuccinate synthase family. Type 1 subfamily. As to quaternary structure, homotetramer.

It localises to the cytoplasm. It carries out the reaction L-citrulline + L-aspartate + ATP = 2-(N(omega)-L-arginino)succinate + AMP + diphosphate + H(+). It functions in the pathway amino-acid biosynthesis; L-arginine biosynthesis; L-arginine from L-ornithine and carbamoyl phosphate: step 2/3. The protein is Argininosuccinate synthase of Colwellia psychrerythraea (strain 34H / ATCC BAA-681) (Vibrio psychroerythus).